Consider the following 559-residue polypeptide: Extracellular matrix protein 1 (559 aa).

The N-terminal stretch at 1–19 (MGTVSRAALILACLALASA) is a signal peptide. 2 repeat units span residues 170–298 (HCQQ…RPDY) and 302–424 (PCPV…YPNY). Residues 170-424 (HCQQGRRGVW…FAHLAPYPNY (255 aa)) form a 2 X approximate repeats region. Asn-373 carries an N-linked (GlcNAc...) asparagine glycan. Asn-463 and Asn-535 each carry an N-linked (GlcNAc...) (high mannose) asparagine glycan. The segment at 535-559 (NATGLGEQGPTRGTDANPAPGSKEE) is disordered. At Ser-556 the chain carries Phosphoserine.

In terms of assembly, interacts (via C-terminus) with HSPG2 (via C-terminus). Interacts with EFEMP1/FBLN3 and LAMB3. Interacts with MMP9. As to expression, expressed in the surrounding connective tissues of developing long bones, but not in the cartilage. The long isoform is expressed in a number of tissues including liver, heart and lungs. The short isoform is expressed in skin and cartilage-containing tissues such as tail and front paw. No expression is found in brain.

The protein localises to the secreted. Its subcellular location is the extracellular space. It localises to the extracellular matrix. Functionally, involved in endochondral bone formation as negative regulator of bone mineralization. Stimulates the proliferation of endothelial cells and promotes angiogenesis. Inhibits MMP9 proteolytic activity. This Mus musculus (Mouse) protein is Extracellular matrix protein 1 (Ecm1).